The following is a 95-amino-acid chain: MNMTINEDALNWYKEELDLESGDQVRFFVRYGGCSNVQKGFSLGVAKDAPQEAGVTAEADGITFFIEESDLWYFDNHDLLVSYSEDADEPVFEYQ.

This sequence belongs to the HesB/IscA family. Interacts with the E1 module of pyruvate dehydrogenase (PdhA-PdhB).

Its function is as follows. Acts as an inhibitor of the pyruvate dehydrogenase. Overexpression does not affect growth with glucose as the main carbon source, but it leads to a dramatic growth defect when cells are grown with pyruvate as the sole carbon source. This Bacillus subtilis (strain 168) protein is Pyruvate dehydrogenase inhibitor.